The sequence spans 173 residues: C-type lectin mosGCTL-7 (173 aa).

The signal sequence occupies residues Met1–Ala24. A C-type lectin domain is found at Asn51–Glu167. Intrachain disulfides connect Cys59–Cys166 and Cys139–Cys158. N-linked (GlcNAc...) asparagine glycosylation is found at Asn119 and Asn144.

As to quaternary structure, interacts with putative receptor-type tyrosine-protein phosphatase mosPTP-1; the interaction may mediate the recruitment of Japanese encephalitis virus particles in complex with C-type lectin mosGCTL-7 to the cell surface.

Its subcellular location is the secreted. Functionally, carbohydrate-binding protein. Its function is as follows. (Microbial infection) Facilitates Japanese encephalitis virus infection in mosquitoes. The polypeptide is C-type lectin mosGCTL-7 (Culex quinquefasciatus (Southern house mosquito)).